Reading from the N-terminus, the 262-residue chain is Hydroxyethylthiazole kinase (262 aa).

M43 lines the substrate pocket. ATP-binding residues include R118 and T164. A191 provides a ligand contact to substrate.

The protein belongs to the Thz kinase family. Mg(2+) is required as a cofactor.

It carries out the reaction 5-(2-hydroxyethyl)-4-methylthiazole + ATP = 4-methyl-5-(2-phosphooxyethyl)-thiazole + ADP + H(+). Its pathway is cofactor biosynthesis; thiamine diphosphate biosynthesis; 4-methyl-5-(2-phosphoethyl)-thiazole from 5-(2-hydroxyethyl)-4-methylthiazole: step 1/1. In terms of biological role, catalyzes the phosphorylation of the hydroxyl group of 4-methyl-5-beta-hydroxyethylthiazole (THZ). The chain is Hydroxyethylthiazole kinase from Cereibacter sphaeroides (strain ATCC 17025 / ATH 2.4.3) (Rhodobacter sphaeroides).